The sequence spans 235 residues: Ribonuclease 3 (235 aa).

The RNase III domain occupies 6 to 131 (IDQLKKLTGH…LIAVIYLDGG (126 aa)). E44 contacts Mg(2+). D48 is a catalytic residue. Mg(2+) is bound by residues D117 and E120. E120 is a catalytic residue. The region spanning 156 to 225 (DAKTELQEWA…AEKILRREGM (70 aa)) is the DRBM domain.

This sequence belongs to the ribonuclease III family. Homodimer. Requires Mg(2+) as cofactor.

The protein resides in the cytoplasm. The catalysed reaction is Endonucleolytic cleavage to 5'-phosphomonoester.. In terms of biological role, digests double-stranded RNA. Involved in the processing of primary rRNA transcript to yield the immediate precursors to the large and small rRNAs (23S and 16S). Processes some mRNAs, and tRNAs when they are encoded in the rRNA operon. Processes pre-crRNA and tracrRNA of type II CRISPR loci if present in the organism. The chain is Ribonuclease 3 from Bartonella bacilliformis (strain ATCC 35685 / KC583 / Herrer 020/F12,63).